Reading from the N-terminus, the 155-residue chain is 3-hydroxyacyl-[acyl-carrier-protein] dehydratase FabZ (155 aa).

Histidine 57 is a catalytic residue.

The protein belongs to the thioester dehydratase family. FabZ subfamily.

It localises to the cytoplasm. The catalysed reaction is a (3R)-hydroxyacyl-[ACP] = a (2E)-enoyl-[ACP] + H2O. Involved in unsaturated fatty acids biosynthesis. Catalyzes the dehydration of short chain beta-hydroxyacyl-ACPs and long chain saturated and unsaturated beta-hydroxyacyl-ACPs. The protein is 3-hydroxyacyl-[acyl-carrier-protein] dehydratase FabZ of Cereibacter sphaeroides (strain ATCC 17025 / ATH 2.4.3) (Rhodobacter sphaeroides).